The following is a 339-amino-acid chain: MIAVPEIRIMDTTLRDGMHAMAHQFTPEQMAQVAAALDEAGVDVIEVTHGDGLAGSSFQYGFAAATDEEYLEAVAPVLKKAKLAALILPGIGTCRDMRMAVQAGVKVFRIATHVTEADISEEHMGLAKEMGAEVVGFLMMSHTVGKEKIAEQAKLMESYGADVVYMVDSAGAMIPPEVTEKIGYLKEVLNIPVGFHAHNNLGLAVGNTLAAVAAGATAVDGTLRGLGAGAGNTSTEVLVAALKKAGYQVGVDLYKIMDAATVLEPMMRRPQVIDNASIILGYAGVYSSFLLHTYRAAERFGLDPRDILMELGRRKVVGGQEDYIVDVAYEMSRNKSRAV.

Residues 7–257 form the Pyruvate carboxyltransferase domain; it reads IRIMDTTLRD…QVGVDLYKIM (251 aa). 15–16 contacts substrate; sequence RD. Asp16 is a binding site for Mn(2+). The Proton acceptor role is filled by His19. Ser169 and His196 together coordinate substrate. Mn(2+) is bound by residues His196 and His198. Substrate is bound at residue Tyr286.

The protein belongs to the 4-hydroxy-2-oxovalerate aldolase family.

It carries out the reaction (S)-4-hydroxy-2-oxopentanoate = acetaldehyde + pyruvate. The chain is 4-hydroxy-2-oxovalerate aldolase from Pelotomaculum thermopropionicum (strain DSM 13744 / JCM 10971 / SI).